The sequence spans 120 residues: Jacalin-related lectin 39 (120 aa).

Residues 6–120 form the Jacalin-type lectin domain; it reads SRDHADFVAH…KRTFDFGGFN (115 aa).

Belongs to the jacalin lectin family.

The chain is Jacalin-related lectin 39 (JAL39) from Arabidopsis thaliana (Mouse-ear cress).